A 122-amino-acid chain; its full sequence is Large ribosomal subunit protein uL14 (122 aa).

This sequence belongs to the universal ribosomal protein uL14 family. Part of the 50S ribosomal subunit. Forms a cluster with proteins L3 and L19. In the 70S ribosome, L14 and L19 interact and together make contacts with the 16S rRNA in bridges B5 and B8.

In terms of biological role, binds to 23S rRNA. Forms part of two intersubunit bridges in the 70S ribosome. The protein is Large ribosomal subunit protein uL14 of Bifidobacterium animalis subsp. lactis (strain AD011).